Reading from the N-terminus, the 86-residue chain is Neurotoxin 3FTx-8a (86 aa).

Residues 1 to 21 (MKTLLLTLVVVTIVCLDLGYT) form the signal peptide. 5 cysteine pairs are disulfide-bonded: C24/C45, C27/C32, C38/C63, C67/C78, and C79/C84.

Expressed by the venom gland.

The protein localises to the secreted. Its function is as follows. Binds with low affinity to muscular (alpha-1-beta-1-delta-epsilon/CHRNA1-CHRNB1-CHRND-CHRNE) and very low affinity to neuronal (alpha-7/CHRNA7) nicotinic acetylcholine receptor (nAChR). In Bungarus fasciatus (Banded krait), this protein is Neurotoxin 3FTx-8a.